The primary structure comprises 192 residues: Transcription termination/antitermination protein NusG (192 aa).

Positions 140-168 constitute a KOW domain; it reads VGEVVTVTDGPFETFMGTVEEIDKERNRL.

This sequence belongs to the NusG family.

In terms of biological role, participates in transcription elongation, termination and antitermination. The polypeptide is Transcription termination/antitermination protein NusG (Rickettsia typhi (strain ATCC VR-144 / Wilmington)).